Here is a 640-residue protein sequence, read N- to C-terminus: Zinc finger protein 549 (640 aa).

Residues Val27–Trp140 form the KRAB domain. The C2H2-type 1; degenerate zinc finger occupies Phe217–His241. Residue Lys223 forms a Glycyl lysine isopeptide (Lys-Gly) (interchain with G-Cter in SUMO2) linkage. A C2H2-type 2; degenerate zinc finger spans residues Tyr247–His269. 13 C2H2-type zinc fingers span residues Tyr275–His298, Tyr304–His326, Tyr332–His355, Tyr361–His383, Tyr389–His411, Tyr417–His439, Tyr445–His467, Tyr473–His495, Tyr501–His523, Cys529–His551, Cys557–His579, Tyr585–His607, and Tyr613–His635.

Belongs to the krueppel C2H2-type zinc-finger protein family.

The protein localises to the nucleus. In terms of biological role, may be involved in transcriptional regulation. This Homo sapiens (Human) protein is Zinc finger protein 549 (ZNF549).